An 82-amino-acid polypeptide reads, in one-letter code: Penaeidin-3a (82 aa).

The N-terminal stretch at Met-1–Gly-19 is a signal peptide. Gln-20 carries the post-translational modification Pyrrolidone carboxylic acid. 3 disulfide bridges follow: Cys-51–Cys-66, Cys-55–Cys-73, and Cys-67–Cys-74. Ser-81 is modified (serine amide).

Post-translationally, the N-terminus forms pyrrolidone carboxylic acid. As to expression, higher expression in hemocytes and to a lesser extent in heart, testis, gills, intestine, lymphoid organ and hepatopancreas. Traces in eyes and subcuticular epithelium. Not present in the brain.

It is found in the cytoplasmic granule. Its function is as follows. Antibacterial activity against M.luteus and E.coli bacteria. Antifungal activity against N.crassa and F.oxysporum. Presents chitin-binding activity. The chain is Penaeidin-3a from Penaeus vannamei (Whiteleg shrimp).